The sequence spans 1426 residues: Phospholipid-transporting ATPase VD (1426 aa).

Topologically, residues Met1–Arg97 are cytoplasmic. Residues Ala98–Phe118 traverse the membrane as a helical segment. Topologically, residues Gln119–Glu121 are exoplasmic loop. Residues Ile122–Asp142 form a helical membrane-spanning segment. Residues Tyr143–Asp321 lie on the Cytoplasmic side of the membrane. A helical transmembrane segment spans residues Val322 to Ile342. The Exoplasmic loop segment spans residues Trp343–Pro365. Residues Leu366–Ile386 form a helical membrane-spanning segment. Residues Ser387–Met1113 lie on the Cytoplasmic side of the membrane. Catalysis depends on Asp438, which acts as the 4-aspartylphosphate intermediate. ATP contacts are provided by Asp438, Lys439, and Thr440. Asp438 provides a ligand contact to Mg(2+). Residue Thr440 coordinates Mg(2+). Positions Asn506 to Ser531 are disordered. The span at Lys512–Leu524 shows a compositional bias: polar residues. ATP-binding positions include Glu730, Phe772, Lys796, Arg840, Thr920, Gly921, Asp922, Gly996 to Thr1003, Arg1030, and Lys1036. Position 1056 (Asp1056) interacts with Mg(2+). Residues Asn1059 and Asp1060 each contribute to the ATP site. Residue Asp1060 coordinates Mg(2+). Residues Ile1114–Phe1134 traverse the membrane as a helical segment. At Cys1135–Tyr1145 the chain is on the exoplasmic loop side. The chain crosses the membrane as a helical span at residues Trp1146–Leu1166. Over Glu1167 to Thr1195 the chain is Cytoplasmic. The helical transmembrane segment at Phe1196–Phe1216 threads the bilayer. The Exoplasmic loop segment spans residues Thr1217 to Asp1224. Residues Ile1225–Val1245 form a helical membrane-spanning segment. At Ile1246–Thr1252 the chain is on the cytoplasmic side. The chain crosses the membrane as a helical span at residues Trp1253–Phe1273. The Exoplasmic loop portion of the chain corresponds to Gly1274–Glu1292. A helical membrane pass occupies residues His1293–Pro1313. At Arg1314–Ser1426 the chain is on the cytoplasmic side. An ATP-binding site is contributed by Ala1364 to Ser1371.

The protein belongs to the cation transport ATPase (P-type) (TC 3.A.3) family. Type IV subfamily. In terms of assembly, component of a P4-ATPase flippase complex which consists of a catalytic alpha subunit ATP10A and an accessory beta subunit TMEM30A. Requires Mg(2+) as cofactor. Autophosphorylated at the conserved aspartate of the P-type ATPase signature sequence. In terms of tissue distribution, expressed in placenta and, to a lesser extent, in kidney.

It is found in the cell membrane. Its subcellular location is the endoplasmic reticulum membrane. The enzyme catalyses ATP + H2O + phospholipidSide 1 = ADP + phosphate + phospholipidSide 2.. The catalysed reaction is a beta-D-glucosyl-(1&lt;-&gt;1')-N-acylsphing-4-enine(out) + ATP + H2O = a beta-D-glucosyl-(1&lt;-&gt;1')-N-acylsphing-4-enine(in) + ADP + phosphate + H(+). Its function is as follows. Catalytic component of a P4-ATPase flippase complex, which catalyzes the hydrolysis of ATP coupled to the transport of glucosylceramide (GlcCer) from the outer to the inner leaflet of the plasma membrane. In Homo sapiens (Human), this protein is Phospholipid-transporting ATPase VD.